The sequence spans 101 residues: Large ribosomal subunit protein eL43 (101 aa).

Residues C40, C43, C59, and C62 each coordinate Zn(2+). The C4-type zinc-finger motif lies at 40–62; that stretch reads CPSCRSLVRLERIAFGIWRCPKC.

Belongs to the eukaryotic ribosomal protein eL43 family. Putative zinc-binding subfamily. As to quaternary structure, part of the 50S ribosomal subunit. Requires Zn(2+) as cofactor.

Functionally, binds to the 23S rRNA. This is Large ribosomal subunit protein eL43 from Pyrobaculum aerophilum (strain ATCC 51768 / DSM 7523 / JCM 9630 / CIP 104966 / NBRC 100827 / IM2).